The following is a 197-amino-acid chain: dTTP/UTP pyrophosphatase (197 aa).

Aspartate 69 serves as the catalytic Proton acceptor.

It belongs to the Maf family. YhdE subfamily. A divalent metal cation is required as a cofactor.

Its subcellular location is the cytoplasm. The catalysed reaction is dTTP + H2O = dTMP + diphosphate + H(+). It carries out the reaction UTP + H2O = UMP + diphosphate + H(+). Its function is as follows. Nucleoside triphosphate pyrophosphatase that hydrolyzes dTTP and UTP. May have a dual role in cell division arrest and in preventing the incorporation of modified nucleotides into cellular nucleic acids. This Lachnoclostridium phytofermentans (strain ATCC 700394 / DSM 18823 / ISDg) (Clostridium phytofermentans) protein is dTTP/UTP pyrophosphatase.